Here is a 391-residue protein sequence, read N- to C-terminus: Protein Wnt-2b (391 aa).

Disulfide bonds link Cys107–Cys118, Cys158–Cys166, Cys168–Cys188, Cys237–Cys251, and Cys239–Cys246. Asn117 is a glycosylation site (N-linked (GlcNAc...) asparagine). Ser243 carries O-palmitoleoyl serine; by PORCN lipidation. N-linked (GlcNAc...) asparagine glycosylation is present at Asn283. 6 disulfides stabilise this stretch: Cys309–Cys340, Cys325–Cys335, Cys339–Cys379, Cys355–Cys370, Cys357–Cys367, and Cys362–Cys363.

This sequence belongs to the Wnt family. As to quaternary structure, forms a soluble 1:1 complex with AFM; this prevents oligomerization and is required for prolonged biological activity. The complex with AFM may represent the physiological form in body fluids. Interacts with FZD4 and FZD5. Post-translationally, palmitoleoylation is required for efficient binding to frizzled receptors. Depalmitoleoylation leads to Wnt signaling pathway inhibition. Isoform 1 is expressed in adult heart, brain, placenta, lung, prostate, testis, ovary, small intestine and colon. In the adult brain, it is mainly found in the caudate nucleus, subthalamic nucleus and thalamus. Also detected in fetal brain, lung and kidney. Isoform 2 is expressed in fetal brain, fetal lung, fetal kidney, caudate nucleus, testis and cancer cell lines.

Its subcellular location is the secreted. It localises to the extracellular space. The protein localises to the extracellular matrix. Functionally, ligand for members of the frizzled family of seven transmembrane receptors. Functions in the canonical Wnt/beta-catenin signaling pathway. Plays a redundant role in embryonic lung development. The protein is Protein Wnt-2b (WNT2B) of Homo sapiens (Human).